Consider the following 315-residue polypeptide: Glycine--tRNA ligase alpha subunit (315 aa).

It belongs to the class-II aminoacyl-tRNA synthetase family. As to quaternary structure, tetramer of two alpha and two beta subunits.

The protein localises to the cytoplasm. The catalysed reaction is tRNA(Gly) + glycine + ATP = glycyl-tRNA(Gly) + AMP + diphosphate. This is Glycine--tRNA ligase alpha subunit from Ectopseudomonas mendocina (strain ymp) (Pseudomonas mendocina).